The following is a 90-amino-acid chain: Large ribosomal subunit protein bL27 (90 aa).

Positions 1–20 (MAHKKAGGSSRNGRDSAGKR) are disordered.

It belongs to the bacterial ribosomal protein bL27 family.

This Rhodopseudomonas palustris (strain BisB18) protein is Large ribosomal subunit protein bL27.